Reading from the N-terminus, the 266-residue chain is MIKIAVCGAAGRMGQRIIVAAVEAGCIISGALERPGHPQIGQDAGLIAGCGQLGVAISDDLNAVVEGCDVLIDFTTPKISLKNLEVCGLKKKSIVIGSTGFTPEERALAAELAKDIPAVLAPNMSVGVNVCFKMLKDLAKTLGDDFDVEIVELHHNKKKDSPSGTAVRMGEVVAEALGRDYNQVANYHREGICGERTKEEIGMQTVRGGDIVGEHTVYFIGMGERIEISHRAMSRDMFSRGSVRAAKWIVGKQPGLYDMQDVLGLK.

Residues 8–13 (GAAGRM) and E33 each bind NAD(+). R34 lines the NADP(+) pocket. NAD(+)-binding positions include 97-99 (GST) and 121-124 (APNM). H154 functions as the Proton donor/acceptor in the catalytic mechanism. A (S)-2,3,4,5-tetrahydrodipicolinate-binding site is contributed by H155. K158 serves as the catalytic Proton donor. 164–165 (GT) contributes to the (S)-2,3,4,5-tetrahydrodipicolinate binding site.

The protein belongs to the DapB family.

It is found in the cytoplasm. The catalysed reaction is (S)-2,3,4,5-tetrahydrodipicolinate + NAD(+) + H2O = (2S,4S)-4-hydroxy-2,3,4,5-tetrahydrodipicolinate + NADH + H(+). The enzyme catalyses (S)-2,3,4,5-tetrahydrodipicolinate + NADP(+) + H2O = (2S,4S)-4-hydroxy-2,3,4,5-tetrahydrodipicolinate + NADPH + H(+). It participates in amino-acid biosynthesis; L-lysine biosynthesis via DAP pathway; (S)-tetrahydrodipicolinate from L-aspartate: step 4/4. Functionally, catalyzes the conversion of 4-hydroxy-tetrahydrodipicolinate (HTPA) to tetrahydrodipicolinate. This chain is 4-hydroxy-tetrahydrodipicolinate reductase, found in Trichlorobacter lovleyi (strain ATCC BAA-1151 / DSM 17278 / SZ) (Geobacter lovleyi).